Consider the following 139-residue polypeptide: Plastocyanin (139 aa).

The signal sequence occupies residues 1–34; it reads MKLIAASLRRLSLAVLTVLLVVSSFAVFTPSASA. Residues 35–139 form the Plastocyanin-like domain; the sequence is ETYTVKLGSD…GMVGKITVAG (105 aa). Residues H73, C123, H126, and M131 each contribute to the Cu cation site.

Belongs to the plastocyanin family. Cu(2+) serves as cofactor.

It localises to the cellular thylakoid membrane. Participates in electron transfer between P700 and the cytochrome b6-f complex in photosystem I. In Nostoc sp. (strain PCC 7120 / SAG 25.82 / UTEX 2576), this protein is Plastocyanin (petE).